We begin with the raw amino-acid sequence, 94 residues long: MKLIFIFLTLLIFVSSCTSILIKESSEEERIYPFNPVASPFDPRSLNQILKIGKIGYCFDCARACMRRDRYIRTCSFERKLCRCSYSHIHHTHG.

A signal peptide spans 1–19 (MKLIFIFLTLLIFVSSCTS). Cystine bridges form between C58/C75, C61/C82, and C65/C84. The tract at residues 67–87 (RRDRYIRTCSFERKLCRCSYS) is PRK6 binding.

This sequence belongs to the DEFL family. Binds to PRK6 LRRs. As to expression, expressed in the pistil. Detected exclusively in the synergid cells.

It localises to the secreted. Functionally, pollen tube attractants guiding pollen tubes to the ovular micropyle. This is Protein LURE 1.1 from Arabidopsis thaliana (Mouse-ear cress).